The primary structure comprises 310 residues: Pantothenate kinase (310 aa).

Residue 95 to 102 (GSVAVGKS) coordinates ATP.

The protein belongs to the prokaryotic pantothenate kinase family.

The protein localises to the cytoplasm. It catalyses the reaction (R)-pantothenate + ATP = (R)-4'-phosphopantothenate + ADP + H(+). The protein operates within cofactor biosynthesis; coenzyme A biosynthesis; CoA from (R)-pantothenate: step 1/5. This Rhodococcus jostii (strain RHA1) protein is Pantothenate kinase.